Here is a 429-residue protein sequence, read N- to C-terminus: MLPKELEEIIDVVLVHNNWRRRETINLIASENVMSPLAELVYLNDMAGRYAEGTVGNRYYQGTKYVDLIEDVLTKRFAKALGATYVDVRPVSGTVANLATYFALVPEGGVVASLPVKYGGHISHNTVGGLKALRLKMVELPWDLDRFNIDVDRARKVIEEAKPNLVILGGSLYLFPHPIREIAEIAKASGAYVLHDSAHVFGLIIGGVFPNPLKEGAHVITTSTHKTFPGPQGGLIAAVVEDKVNDLQRAVFPVFTSNYHLHRYAATYVTLVEMEHFGAEYARRVVENARALAEALAEQGVPPVAEALGYTRTHQVAVDVSKFGGGDKVAAKLEEANIIVNKNALPWDKSVLKPSGIRLGVQEMTRFGMGKDEMREIAKFIARVLSGEDPAGVRRDVAEFRKAYLEIKYGFKIDRELVDKVFKSLSLYT.

120-122 (GHI) is a (6S)-5,6,7,8-tetrahydrofolate binding site. The residue at position 226 (K226) is an N6-(pyridoxal phosphate)lysine.

The protein belongs to the SHMT family. Homodimer. The cofactor is pyridoxal 5'-phosphate.

It localises to the cytoplasm. It functions in the pathway amino-acid biosynthesis; glycine biosynthesis; glycine from L-serine: step 1/1. Functionally, catalyzes the reversible interconversion of serine and glycine with a modified folate serving as the one-carbon carrier. Also exhibits a pteridine-independent aldolase activity toward beta-hydroxyamino acids, producing glycine and aldehydes, via a retro-aldol mechanism. The protein is Serine hydroxymethyltransferase of Pyrobaculum arsenaticum (strain DSM 13514 / JCM 11321 / PZ6).